The chain runs to 187 residues: MKKVLDETLESSPIIKRGEYNYFIHPIADGVPLFTSDLLRDVATRTIQRIDTNIDKIVTAEAMGIPIATAISMSTDIPYVVMRKRQYFLEGEVPVHQETGYSKGELYLNGVEKGDRVTIVDDVLSTGGTLIAVIKALEKAGAEIVDIVCVIERGDGKSKVKEITGYDVQTLVKIDVTENGVVILESN.

It belongs to the purine/pyrimidine phosphoribosyltransferase family. Archaeal HPRT subfamily. In terms of assembly, homodimer.

It is found in the cytoplasm. The catalysed reaction is IMP + diphosphate = hypoxanthine + 5-phospho-alpha-D-ribose 1-diphosphate. It carries out the reaction GMP + diphosphate = guanine + 5-phospho-alpha-D-ribose 1-diphosphate. Its pathway is purine metabolism; IMP biosynthesis via salvage pathway; IMP from hypoxanthine: step 1/1. Catalyzes a salvage reaction resulting in the formation of IMP that is energically less costly than de novo synthesis. The protein is Hypoxanthine/guanine phosphoribosyltransferase of Methanococcus voltae (strain ATCC BAA-1334 / A3).